Reading from the N-terminus, the 223-residue chain is Sigma non-opioid intracellular receptor 1 (223 aa).

Residues 1–9 (MPWAVGRRW) are Lumenal-facing. Residues 2-8 (PWAVGRR) form a targeting to endoplasmic reticulum-associated lipid droplets region. Residues 10-30 (AWITLFLTIVAVLIQAVWLWL) traverse the membrane as a helical segment. Topologically, residues 31-223 (GTQSFVFQRE…LTTYLFGQDP (193 aa)) are cytoplasmic. An important for ligand-binding region spans residues 99–106 (SLSEYVLL). The tract at residues 177-223 (VIPSTLAFALSDTIFSTQDFLTLFYTLRAYARGLRLELTTYLFGQDP) is C-terminal hydrophobic region.

This sequence belongs to the ERG2 family. As to quaternary structure, homotrimer. Interacts with KCNA2; cocaine consumption leads to increased interaction. Forms a ternary complex with ANK2 and ITPR3. The complex is disrupted by agonists. Interacts with KCNA4. Interacts with RNF112 in an oxidative stress-regulated manner. In terms of tissue distribution, expressed in ependymocytes and neurons throughout the CNS from the olfactory bulb to the spinal cord. Expressed by progenitor, mature and satellite oligodendrocytes and by Schwann cells (at protein level). Expressed in liver, intestine, kidney, brain, lung and heart. Expressed by retinal cells.

Its subcellular location is the nucleus inner membrane. The protein resides in the nucleus outer membrane. It is found in the nucleus envelope. The protein localises to the cytoplasmic vesicle. It localises to the endoplasmic reticulum membrane. Its subcellular location is the membrane. The protein resides in the lipid droplet. It is found in the cell junction. The protein localises to the cell membrane. It localises to the cell projection. Its subcellular location is the growth cone. The protein resides in the postsynaptic density membrane. Functions in lipid transport from the endoplasmic reticulum and is involved in a wide array of cellular functions probably through regulation of the biogenesis of lipid microdomains at the plasma membrane. Involved in the regulation of different receptors it plays a role in BDNF signaling and EGF signaling. Also regulates ion channels like the potassium channel and could modulate neurotransmitter release. Plays a role in calcium signaling through modulation together with ANK2 of the ITP3R-dependent calcium efflux at the endoplasmic reticulum. Plays a role in several other cell functions including proliferation, survival and death. Originally identified for its ability to bind various psychoactive drugs it is involved in learning processes, memory and mood alteration. Necessary for proper mitochondrial axonal transport in motor neurons, in particular the retrograde movement of mitochondria. Plays a role in protecting cells against oxidative stress-induced cell death via its interaction with RNF112. This is Sigma non-opioid intracellular receptor 1 (Sigmar1) from Rattus norvegicus (Rat).